The primary structure comprises 129 residues: Ribosome-binding factor A (129 aa).

The protein belongs to the RbfA family. Monomer. Binds 30S ribosomal subunits, but not 50S ribosomal subunits or 70S ribosomes.

Its subcellular location is the cytoplasm. Its function is as follows. One of several proteins that assist in the late maturation steps of the functional core of the 30S ribosomal subunit. Associates with free 30S ribosomal subunits (but not with 30S subunits that are part of 70S ribosomes or polysomes). Required for efficient processing of 16S rRNA. May interact with the 5'-terminal helix region of 16S rRNA. This chain is Ribosome-binding factor A, found in Marinomonas sp. (strain MWYL1).